The following is a 474-amino-acid chain: Shufflon protein A (474 aa).

Residues 1–361 (MKKYDRGWAS…TGAILSCQSG (361 aa)) form a constant region region. The interval 362–474 (TWKTSGSLNG…GVFSVFGYQT (113 aa)) is variable region.

The protein is Shufflon protein A of Escherichia coli.